Reading from the N-terminus, the 279-residue chain is Single-strand selective monofunctional uracil DNA glycosylase (279 aa).

3 residues coordinate substrate: methionine 86, phenylalanine 100, and asparagine 165. Positions 175-189 are DNA-binding; sequence SGRNLTPAELPAKQR. Histidine 241 serves as a coordination point for substrate.

It belongs to the uracil-DNA glycosylase (UDG) superfamily. SMUG1 family.

Its subcellular location is the nucleus. Recognizes base lesions in the genome and initiates base excision DNA repair. Acts as a monofunctional DNA glycosylase specific for uracil (U) residues in DNA with a preference for single-stranded DNA substrates. The activity is greater toward mismatches (U/G) compared to matches (U/A). Excises uracil (U), 5-formyluracil (fU) and uracil derivatives bearing an oxidized group at C5 [5-hydroxyuracil (hoU) and 5-hydroxymethyluracil (hmU)] in ssDNA and dsDNA, but not analogous cytosine derivatives (5-hydroxycytosine and 5-formylcytosine), nor other oxidized bases. The activity is damage-specific and salt-dependent. The substrate preference is the following: ssDNA &gt; dsDNA (G pair) = dsDNA (A pair) at low salt concentration, and dsDNA (G pair) &gt; dsDNA (A pair) &gt; ssDNA at high salt concentration. The chain is Single-strand selective monofunctional uracil DNA glycosylase (Smug1) from Mus musculus (Mouse).